The chain runs to 479 residues: ATP synthase subunit beta (479 aa).

153–160 serves as a coordination point for ATP; it reads GGAGVGKT.

The protein belongs to the ATPase alpha/beta chains family. As to quaternary structure, F-type ATPases have 2 components, CF(1) - the catalytic core - and CF(0) - the membrane proton channel. CF(1) has five subunits: alpha(3), beta(3), gamma(1), delta(1), epsilon(1). CF(0) has three main subunits: a(1), b(2) and c(9-12). The alpha and beta chains form an alternating ring which encloses part of the gamma chain. CF(1) is attached to CF(0) by a central stalk formed by the gamma and epsilon chains, while a peripheral stalk is formed by the delta and b chains.

It localises to the cell membrane. It catalyses the reaction ATP + H2O + 4 H(+)(in) = ADP + phosphate + 5 H(+)(out). Its function is as follows. Produces ATP from ADP in the presence of a proton gradient across the membrane. The catalytic sites are hosted primarily by the beta subunits. The sequence is that of ATP synthase subunit beta from Lactobacillus delbrueckii subsp. bulgaricus (strain ATCC BAA-365 / Lb-18).